We begin with the raw amino-acid sequence, 624 residues long: Kelch-like ECH-associated protein 1 (624 aa).

The tract at residues 1 to 27 is disordered; that stretch reads MQPEPRPSGAGAHTQFLPLRSQRPEGA. At C38 the chain carries S-(2-succinyl)cysteine. In terms of domain architecture, BTB spans 77 to 149; sequence CDVTLQVKYE…AYTASISMGE (73 aa). R135 participates in a covalent cross-link: N5-[4-(S-L-cysteinyl)-5-methyl-1H-imidazol-2-yl]-L-ornithine (Arg-Cys) (interchain with C-151 in KEAP1). S-(2-succinyl)cysteine occurs at positions 151 and 241. C151 is subject to S-(2,3-dicarboxypropyl)cysteine; alternate. C151 is modified (S-nitrosocysteine; alternate). C151 participates in a covalent cross-link: N5-[4-(S-L-cysteinyl)-5-methyl-1H-imidazol-2-yl]-L-ornithine (Cys-Arg) (interchain with R-135 in KEAP1). The region spanning 184–286 is the BACK domain; sequence AIGIANFAEQ…TPHFLQMQLQ (103 aa). 2 positions are modified to S-(2,3-dicarboxypropyl)cysteine: C257 and C273. Residues C288 and C319 each carry the S-(2-succinyl)cysteine modification. The residue at position 288 (C288) is an S-(2,3-dicarboxypropyl)cysteine; alternate. Kelch repeat units follow at residues 327–372, 373–423, 424–470, 471–517, 519–564, and 565–611; these read LIYT…VVGG, LLYA…VIDG, HIYA…VLNR, LLYA…VLHN, IYAA…VHQG, and RIYV…VTME. C434 bears the S-cGMP-cysteine mark. C613 carries the post-translational modification S-(2-succinyl)cysteine.

It belongs to the KEAP1 family. Component of the BCR(KEAP1) E3 ubiquitin ligase complex, at least composed of 2 molecules of CUL3, 2 molecules of KEAP1, and RBX1. Interacts with NFE2L2/NRF2; the interaction is direct. Forms a ternary complex with NFE2L2/NRF2 and PGAM5. Interacts with (phosphorylated) SQSTM1/p62; the interaction is direct and inactivates the BCR(KEAP1) complex by sequestering it in inclusion bodies, promoting its degradation. Interacts with NFE2L1. Interacts with BPTF and PTMA. Interacts with MAP1LC3B. Interacts indirectly with ENC1. Interacts with SESN1 and SESN2. Interacts with HSP90AA1 and HSP90AB1. Interacts with PGCKA1; this interaction prevents the ubiquitination of KEAP1 by TRIM25, thus protecting KEAP1 protein from degradation. In terms of processing, non-enzymatic covalent modifications of reactive cysteines by electrophile metabolites inactivate the BCR(KEAP1) complex. Accumulation of fumarate promotes the formation of cysteine S-succination (S-(2-succinyl)cysteine), leading to inactivate the BCR(KEAP1) complex and promote NFE2L2/NRF2 nuclear accumulation and activation. Nitric oxide-dependent 8-Nitro-cGMP formation promotes cysteine guanylation (S-cGMP-cysteine), leading to NFE2L2/NRF2 nuclear accumulation and activation. Itaconate, an anti-inflammatory metabolite generated in response to lipopolysaccharide, alkylates cysteines, activating NFE2L2/NRF2. Methylglyoxal, a reactive metabolite that accumulates when the glycolytic enzyme PGK1 is inhibited, promotes formation of a methylimidazole cross-link between proximal Cys-151 and Arg-135 on another KEAP1 molecule, resulting in an inactive dimer that inactivates the BCR(KEAP1) complex. Post-translationally, degraded via a proteasomal-independent process during selective autophagy: interaction with phosphorylated SQSTM1/p62 sequesters KEAP1 in inclusion bodies, leading to its degradation. Auto-ubiquitinated by the BCR(KEAP1) complex. Quinone-induced oxidative stress, but not sulforaphane, increases its ubiquitination. Ubiquitination and subsequent degradation is most pronounced following prolonged exposure of cells to oxidative stress, particularly in glutathione-deficient cells that are highly susceptible to oxidative stress. Deubiquitinated by USP25; leading to stabilization. Ubiquitinated by TRIM25; leading to degradation upon ER stress.

It is found in the cytoplasm. Its subcellular location is the nucleus. Its pathway is protein modification; protein ubiquitination. With respect to regulation, ubiquitin ligase activity of the BCR(KEAP1) complex is inhibited by oxidative stress and electrophile metabolites such as sulforaphane. Electrophile metabolites react with reactive cysteine residues in KEAP1 and trigger non-enzymatic covalent modifications of these cysteine residues, leading to inactivate the ubiquitin ligase activity of the BCR(KEAP1) complex. Selective autophagy also inactivates the BCR(KEAP1) complex via interaction between KEAP1 and SQSTM1/p62, which sequesters the complex in inclusion bodies and promotes its degradation. In terms of biological role, substrate-specific adapter of a BCR (BTB-CUL3-RBX1) E3 ubiquitin ligase complex that regulates the response to oxidative stress by targeting NFE2L2/NRF2 for ubiquitination. KEAP1 acts as a key sensor of oxidative and electrophilic stress: in normal conditions, the BCR(KEAP1) complex mediates ubiquitination and degradation of NFE2L2/NRF2, a transcription factor regulating expression of many cytoprotective genes. In response to oxidative stress, different electrophile metabolites trigger non-enzymatic covalent modifications of highly reactive cysteine residues in KEAP1, leading to inactivate the ubiquitin ligase activity of the BCR(KEAP1) complex, promoting NFE2L2/NRF2 nuclear accumulation and expression of phase II detoxifying enzymes. In response to selective autophagy, KEAP1 is sequestered in inclusion bodies following its interaction with SQSTM1/p62, leading to inactivation of the BCR(KEAP1) complex and activation of NFE2L2/NRF2. The BCR(KEAP1) complex also mediates ubiquitination of SQSTM1/p62, increasing SQSTM1/p62 sequestering activity and degradation. The BCR(KEAP1) complex also targets BPTF and PGAM5 for ubiquitination and degradation by the proteasome. The polypeptide is Kelch-like ECH-associated protein 1 (Sus scrofa (Pig)).